The primary structure comprises 361 residues: tRNA 2-selenouridine synthase (361 aa).

The 124-residue stretch at 11–134 (LLADTPLIDV…LRQTAIQATW (124 aa)) folds into the Rhodanese domain. Cysteine 94 acts as the S-selanylcysteine intermediate in catalysis.

Belongs to the SelU family. Monomer.

The catalysed reaction is 5-methylaminomethyl-2-thiouridine(34) in tRNA + selenophosphate + (2E)-geranyl diphosphate + H2O + H(+) = 5-methylaminomethyl-2-selenouridine(34) in tRNA + (2E)-thiogeraniol + phosphate + diphosphate. It carries out the reaction 5-methylaminomethyl-2-thiouridine(34) in tRNA + (2E)-geranyl diphosphate = 5-methylaminomethyl-S-(2E)-geranyl-thiouridine(34) in tRNA + diphosphate. The enzyme catalyses 5-methylaminomethyl-S-(2E)-geranyl-thiouridine(34) in tRNA + selenophosphate + H(+) = 5-methylaminomethyl-2-(Se-phospho)selenouridine(34) in tRNA + (2E)-thiogeraniol. It catalyses the reaction 5-methylaminomethyl-2-(Se-phospho)selenouridine(34) in tRNA + H2O = 5-methylaminomethyl-2-selenouridine(34) in tRNA + phosphate. Its function is as follows. Involved in the post-transcriptional modification of the uridine at the wobble position (U34) of tRNA(Lys), tRNA(Glu) and tRNA(Gln). Catalyzes the conversion of 2-thiouridine (S2U-RNA) to 2-selenouridine (Se2U-RNA). Acts in a two-step process involving geranylation of 2-thiouridine (S2U) to S-geranyl-2-thiouridine (geS2U) and subsequent selenation of the latter derivative to 2-selenouridine (Se2U) in the tRNA chain. This chain is tRNA 2-selenouridine synthase, found in Salmonella schwarzengrund (strain CVM19633).